The sequence spans 162 residues: Interleukin-15 (162 aa).

The N-terminal stretch at 1–29 is a signal peptide; the sequence is MRILKPYLRSTSIQCYLCLLLNSHFLTEA. Positions 30–48 are excised as a propeptide; that stretch reads CIPVFILSCINAGLPKTEA. 2 disulfide bridges follow: cysteine 83/cysteine 133 and cysteine 90/cysteine 136. Residues asparagine 104 and asparagine 127 are each glycosylated (N-linked (GlcNAc...) asparagine).

This sequence belongs to the IL-15/IL-21 family.

The protein localises to the secreted. In terms of biological role, cytokine that plays a major role in the development of inflammatory and protective immune responses to microbial invaders and parasites by modulating immune cells of both the innate and adaptive immune systems. Stimulates the proliferation of natural killer cells, T-cells and B-cells and promotes the secretion of several cytokines. In monocytes, induces the production of IL8 and monocyte chemotactic protein 1/CCL2, two chemokines that attract neutrophils and monocytes respectively to sites of infection. Unlike most cytokines, which are secreted in soluble form, IL15 is expressed in association with its high affinity IL15RA on the surface of IL15-producing cells and delivers signals to target cells that express IL2RB and IL2RG receptor subunits. Binding to its receptor triggers the phosphorylation of JAK1 and JAK3 and the recruitment and subsequent phosphorylation of signal transducer and activator of transcription-3/STAT3 and STAT5. In mast cells, induces the rapid tyrosine phosphorylation of STAT6 and thereby controls mast cell survival and release of cytokines such as IL4. This Felis catus (Cat) protein is Interleukin-15 (IL15).